The sequence spans 115 residues: MLHIYIGKRLKGPASTFCFPLVLFTRTCTISSQRRPEINSGYFVQTDSAFHFWRPPIAPAEMGHEGHYGALVFPFSPRFPLPIVRSGNFFVSLAYIAPIRQSSPVSESSSPNSWP.

This is an uncharacterized protein from Saccharomyces cerevisiae (strain ATCC 204508 / S288c) (Baker's yeast).